A 455-amino-acid polypeptide reads, in one-letter code: Glutamyl-tRNA reductase (455 aa).

Residues 49 to 52 (TCNR), Ser-109, 114 to 116 (ETQ), and Gln-120 each bind substrate. Cys-50 (nucleophile) is an active-site residue. 189–194 (GAGKMG) is a binding site for NADP(+).

This sequence belongs to the glutamyl-tRNA reductase family. In terms of assembly, homodimer.

It catalyses the reaction (S)-4-amino-5-oxopentanoate + tRNA(Glu) + NADP(+) = L-glutamyl-tRNA(Glu) + NADPH + H(+). The protein operates within porphyrin-containing compound metabolism; protoporphyrin-IX biosynthesis; 5-aminolevulinate from L-glutamyl-tRNA(Glu): step 1/2. In terms of biological role, catalyzes the NADPH-dependent reduction of glutamyl-tRNA(Glu) to glutamate 1-semialdehyde (GSA). In Bacillus pumilus (strain SAFR-032), this protein is Glutamyl-tRNA reductase.